The sequence spans 1271 residues: Protein flightless-1 homolog (1271 aa).

N-acetylmethionine is present on Met1. The segment at 1-427 (MEATGVLPFV…SGSKDPLARK (427 aa)) is interaction with LRRFIP1 and LRRFIP2. 16 LRR repeats span residues 7 to 32 (LPFVRGVDLSGNDFKGGYFPENVKAM), 33 to 55 (TSLRWLKLNRTGLCYLPEELAAL), 56 to 78 (QKLEHLSVSHNHLTTLHGELSSL), 80 to 103 (SLRAIVARANSLKNSGVPDDIFKL), 104 to 126 (DDLSVLDLSHNQLTECPRELENA), 127 to 149 (KNMLVLNLSHNGIDSIPNQLFIN), 150 to 173 (LTDLLYLDLSENRLESLPPQMRRL), 175 to 196 (HLQTLVLNGNPLLHAQLRQLPA), 197 to 222 (MMALQTLHLRNTQRTQSNLPTSLEGL), 223 to 245 (SNLSDVDLSCNDLTRVPECLYTL), 247 to 268 (SLRRLNLSSNQIAELSLCIDQW), 269 to 291 (VHLETLNLSRNQLTSLPSAICKL), 293 to 316 (KLKKLYLNSNKLDFDGLPSGIGKL), 317 to 339 (TSLEEFMAANNNLELIPESLCRC), 340 to 363 (PKLKKLVLNKNRLVTLPEAIHFLT), and 365 to 385 (IQVLDVRENPSLVMPPKPADR). Lys21 carries the post-translational modification N6-acetyllysine. Ser406 carries the phosphoserine modification. Ser436 carries the phosphoserine; by SGK3 modification. Residues 495-827 (VGQLPGLTIW…VVSRSLEGTE (333 aa)) form an interaction with ACTL6A region. Gelsolin-like repeat units lie at residues 509-591 (FVPV…EEFL), 629-703 (NIKL…PGFW), and 759-831 (LMPG…AQVF). At Ser860 the chain carries Phosphoserine. The disordered stretch occupies residues 951-977 (KTEDKEGKASAEAREGEEAAAEAEEKQ). Basic and acidic residues predominate over residues 952 to 967 (TEDKEGKASAEAREGE). Over residues 968–977 (EAAAEAEEKQ) the composition is skewed to acidic residues. A Gelsolin-like 4 repeat occupies 1183–1256 (KCSDFCQDDL…VRKGNEQRAF (74 aa)).

As to quaternary structure, interacts with actin, ACTL6A and NCOA2. Interacts with CARM1. Interacts with LRRFIP1, LRRFIP2 and MYD88. Upon LPS stimulation, LRRFIP2 competes for MYD88-binding; LRRFIP1 constitutively blocks the interaction with MyD88, even in the absence of LPS. Interacts with the nuclear receptors ESR1 and THRB. Interacts with SGK3. Interacts (via the gelsolin-like region) with TMOD1 and TMOD3. Interacts with LMOD2, VCL, GSN and DES. As to expression, expressed in blastocyst.

It is found in the nucleus. Its subcellular location is the cytoplasm. The protein localises to the cytoskeleton. It localises to the microtubule organizing center. The protein resides in the centrosome. It is found in the cell junction. Its subcellular location is the focal adhesion. The protein localises to the cell projection. It localises to the podosome. In terms of biological role, is a regulator of actin polymerization, required for proper myofibril organization and regulation of the length of sarcomeric thin filaments. It also plays a role in the assembly of cardiomyocyte cell adhesion complexes. Regulates cytoskeletal rearrangements involved in cytokinesis and cell migration, by inhibiting Rac1-dependent paxillin phosphorylation. May play a role as coactivator in transcriptional activation by hormone-activated nuclear receptors (NR) and acts in cooperation with NCOA2 and CARM1. Involved in estrogen hormone signaling. The protein is Protein flightless-1 homolog (Flii) of Mus musculus (Mouse).